Consider the following 245-residue polypeptide: 3-deoxy-manno-octulosonate cytidylyltransferase (245 aa).

This sequence belongs to the KdsB family.

The protein localises to the cytoplasm. The catalysed reaction is 3-deoxy-alpha-D-manno-oct-2-ulosonate + CTP = CMP-3-deoxy-beta-D-manno-octulosonate + diphosphate. The protein operates within nucleotide-sugar biosynthesis; CMP-3-deoxy-D-manno-octulosonate biosynthesis; CMP-3-deoxy-D-manno-octulosonate from 3-deoxy-D-manno-octulosonate and CTP: step 1/1. It participates in bacterial outer membrane biogenesis; lipopolysaccharide biosynthesis. Its function is as follows. Activates KDO (a required 8-carbon sugar) for incorporation into bacterial lipopolysaccharide in Gram-negative bacteria. The chain is 3-deoxy-manno-octulosonate cytidylyltransferase from Rhodopseudomonas palustris (strain ATCC BAA-98 / CGA009).